The primary structure comprises 217 residues: uncharacterized protein (217 aa).

The 106-residue stretch at 98–203 (QRRQYVRTDA…GDQQALLQYC (106 aa)) folds into the PilZ domain.

This is an uncharacterized protein from Bacillus subtilis (strain 168).